The chain runs to 61 residues: Small ribosomal subunit protein uS14 (61 aa).

Zn(2+)-binding residues include C24, C27, C40, and C43.

It belongs to the universal ribosomal protein uS14 family. Zinc-binding uS14 subfamily. In terms of assembly, part of the 30S ribosomal subunit. Contacts proteins S3 and S10. Zn(2+) serves as cofactor.

Its function is as follows. Binds 16S rRNA, required for the assembly of 30S particles and may also be responsible for determining the conformation of the 16S rRNA at the A site. The chain is Small ribosomal subunit protein uS14 from Rhodopirellula baltica (strain DSM 10527 / NCIMB 13988 / SH1).